The following is a 505-amino-acid chain: Actin nucleation-promoting factor WASL (505 aa).

At Ser2 the chain carries N-acetylserine. Positions 34 to 141 constitute a WH1 domain; the sequence is LGKKCVTMSS…KAVTDLLGRR (108 aa). 2 disordered regions span residues 138-163 and 184-205; these read LGRRQRKSEKRRDPPNGPNLPMATVD and HTKEKKKGKAKKKRLTKADIGT. A compositionally biased stretch (basic residues) spans 186 to 198; sequence KEKKKGKAKKKRL. One can recognise a CRIB domain in the interval 203–216; that stretch reads IGTPSNFQHIGHVG. The residue at position 242 (Ser242) is a Phosphoserine; by TNK2. Tyr256 carries the phosphotyrosine; by FAK1 and TNK2 modification. The interval 266 to 406 is disordered; sequence EAVKNELRRQ…HQVPTTAGNK (141 aa). 2 stretches are compositionally biased toward pro residues: residues 276-364 and 371-391; these read APPP…PPPS and VAPPPPPPPPPPPGPPPPPGL. The residue at position 307 (Arg307) is an Omega-N-methylarginine. WH2 domains are found at residues 405–422 and 433–450; these read NKAALLDQIREGAQLKKV and GRDALLDQIRQGIQLKSV. The segment at 476-505 is disordered; it reads QKRSKAIHSSDEDEDEDDEEDFEDDDEWED. Phosphoserine is present on residues Ser484 and Ser485. The span at 486–505 shows a compositional bias: acidic residues; sequence DEDEDEDDEEDFEDDDEWED.

In terms of assembly, binds actin and the Arp2/3 complex. Interacts with CDC42. Interacts with FCHSD1. Interacts with FCHSD2. Binds to SH3 domains of GRB2. Interacts with the C-terminal SH3 domain of DNMBP. Interacts with SNX9. Interacts with the WW domains of PRPF40A/FBP11. Interacts with PTK2/FAK1. Interacts with PACSIN1, PACSIN2 and PACSIN3. Interacts with NOSTRIN. Binds to TNK2. Interacts with SNX33. Interacts with NONO (via second RRM domain); the interaction is direct. Component of a multiprotein complex with NONO and SFPQ; associates with the complex via direct interaction with NONO. As to quaternary structure, (Microbial infection) Interacts with E.coli effector protein EspF(U). Identified in a complex containing at least WASL, BAIAP2L1 and E.coli EspF(U). (Microbial infection) Interacts with Shigella flexneri protein IcsA. The interaction with IcsA enhances the affinity of WASL for Arp2/3, thus assembling a tight complex which has maximal activity in actin assembly. In terms of processing, phosphorylation at Ser-242, Tyr-256, Ser-484 and Ser-485 enhances actin polymerization activity.

The protein localises to the cytoplasm. Its subcellular location is the cytoskeleton. It localises to the nucleus. Regulates actin polymerization by stimulating the actin-nucleating activity of the Arp2/3 complex. Involved in various processes, such as mitosis and cytokinesis, via its role in the regulation of actin polymerization. Together with CDC42, involved in the extension and maintenance of the formation of thin, actin-rich surface projections called filopodia. In addition to its role in the cytoplasm, also plays a role in the nucleus by regulating gene transcription, probably by promoting nuclear actin polymerization. Binds to HSF1/HSTF1 and forms a complex on heat shock promoter elements (HSE) that negatively regulates HSP90 expression. Plays a role in dendrite spine morphogenesis. Decreasing levels of DNMBP (using antisense RNA) alters apical junction morphology in cultured enterocytes, junctions curve instead of being nearly linear. This is Actin nucleation-promoting factor WASL (WASL) from Homo sapiens (Human).